The sequence spans 455 residues: GTPase Der (455 aa).

2 consecutive EngA-type G domains span residues 4 to 169 (PVVA…PPKD) and 178 to 353 (IQLS…EQHR). GTP is bound by residues 10 to 17 (GRPNVGKS), 57 to 61 (DTGGL), 120 to 123 (NKCE), 184 to 191 (GRPNVGKS), 231 to 235 (DTAGI), and 296 to 299 (NKWD). The region spanning 354-439 (RRVSTSVVNE…PVKLFWRGKQ (86 aa)) is the KH-like domain.

This sequence belongs to the TRAFAC class TrmE-Era-EngA-EngB-Septin-like GTPase superfamily. EngA (Der) GTPase family. As to quaternary structure, associates with the 50S ribosomal subunit.

In terms of biological role, GTPase that plays an essential role in the late steps of ribosome biogenesis. This chain is GTPase Der, found in Synechococcus sp. (strain CC9311).